The primary structure comprises 177 residues: Adenylyl-sulfate kinase (177 aa).

An ATP-binding site is contributed by 12–19 (GLSGAGKT). Residue S86 is the Phosphoserine intermediate of the active site.

Belongs to the APS kinase family.

The catalysed reaction is adenosine 5'-phosphosulfate + ATP = 3'-phosphoadenylyl sulfate + ADP + H(+). It functions in the pathway sulfur metabolism; hydrogen sulfide biosynthesis; sulfite from sulfate: step 2/3. In terms of biological role, catalyzes the synthesis of activated sulfate. The polypeptide is Adenylyl-sulfate kinase (Picosynechococcus sp. (strain ATCC 27264 / PCC 7002 / PR-6) (Agmenellum quadruplicatum)).